The chain runs to 497 residues: Bifunctional protein GlmU (497 aa).

The interval 1-252 (MSQPSARPSA…VWEVEGANDR (252 aa)) is pyrophosphorylase. Residues 14 to 17 (LAAG), lysine 28, glutamine 86, 91 to 92 (GT), 115 to 117 (YGD), glycine 154, glutamate 169, asparagine 192, and asparagine 250 each bind UDP-N-acetyl-alpha-D-glucosamine. Aspartate 117 serves as a coordination point for Mg(2+). Mg(2+) is bound at residue asparagine 250. A linker region spans residues 253–273 (RQLSDLGRRLNERVLRHWMKE). An N-acetyltransferase region spans residues 274–497 (GVTVVDPSST…AGAEGSGAQG (224 aa)). The UDP-N-acetyl-alpha-D-glucosamine site is built by arginine 355 and lysine 373. Histidine 385 acts as the Proton acceptor in catalysis. Residues tyrosine 388 and asparagine 399 each contribute to the UDP-N-acetyl-alpha-D-glucosamine site. Acetyl-CoA is bound by residues 408–409 (NY), serine 427, and alanine 445. The disordered stretch occupies residues 473–497 (PAKRPGTSSAEAARAAGAEGSGAQG). Over residues 480-490 (SSAEAARAAGA) the composition is skewed to low complexity.

This sequence in the N-terminal section; belongs to the N-acetylglucosamine-1-phosphate uridyltransferase family. In the C-terminal section; belongs to the transferase hexapeptide repeat family. In terms of assembly, homotrimer. It depends on Mg(2+) as a cofactor.

Its subcellular location is the cytoplasm. It catalyses the reaction alpha-D-glucosamine 1-phosphate + acetyl-CoA = N-acetyl-alpha-D-glucosamine 1-phosphate + CoA + H(+). It carries out the reaction N-acetyl-alpha-D-glucosamine 1-phosphate + UTP + H(+) = UDP-N-acetyl-alpha-D-glucosamine + diphosphate. The protein operates within nucleotide-sugar biosynthesis; UDP-N-acetyl-alpha-D-glucosamine biosynthesis; N-acetyl-alpha-D-glucosamine 1-phosphate from alpha-D-glucosamine 6-phosphate (route II): step 2/2. Its pathway is nucleotide-sugar biosynthesis; UDP-N-acetyl-alpha-D-glucosamine biosynthesis; UDP-N-acetyl-alpha-D-glucosamine from N-acetyl-alpha-D-glucosamine 1-phosphate: step 1/1. It functions in the pathway bacterial outer membrane biogenesis; LPS lipid A biosynthesis. Functionally, catalyzes the last two sequential reactions in the de novo biosynthetic pathway for UDP-N-acetylglucosamine (UDP-GlcNAc). The C-terminal domain catalyzes the transfer of acetyl group from acetyl coenzyme A to glucosamine-1-phosphate (GlcN-1-P) to produce N-acetylglucosamine-1-phosphate (GlcNAc-1-P), which is converted into UDP-GlcNAc by the transfer of uridine 5-monophosphate (from uridine 5-triphosphate), a reaction catalyzed by the N-terminal domain. The protein is Bifunctional protein GlmU of Micrococcus luteus (strain ATCC 4698 / DSM 20030 / JCM 1464 / CCM 169 / CCUG 5858 / IAM 1056 / NBRC 3333 / NCIMB 9278 / NCTC 2665 / VKM Ac-2230) (Micrococcus lysodeikticus).